The chain runs to 380 residues: Tryptophan--tRNA ligase (380 aa).

The 'HIGH' region motif lies at 81 to 89 (PSLGMHIGH). A 'KMSKS' region motif is present at residues 253–257 (KMSSS).

Belongs to the class-I aminoacyl-tRNA synthetase family.

It localises to the cytoplasm. The catalysed reaction is tRNA(Trp) + L-tryptophan + ATP = L-tryptophyl-tRNA(Trp) + AMP + diphosphate + H(+). The sequence is that of Tryptophan--tRNA ligase from Saccharolobus solfataricus (strain ATCC 35092 / DSM 1617 / JCM 11322 / P2) (Sulfolobus solfataricus).